Here is a 23-residue protein sequence, read N- to C-terminus: Basic phospholipase A2 homolog Vur-S49 analog (23 aa).

The tract at residues 1-23 (SVLEIGLMLQEETEKNPKTSYSI) is disordered.

Post-translationally, contains 7 disulfide bonds. In terms of tissue distribution, expressed by the venom gland.

The protein localises to the secreted. This chain is Basic phospholipase A2 homolog Vur-S49 analog, found in Vipera renardi (Steppe viper).